Here is a 116-residue protein sequence, read N- to C-terminus: Large ribosomal subunit protein uL22 (116 aa).

Belongs to the universal ribosomal protein uL22 family. In terms of assembly, part of the 50S ribosomal subunit.

In terms of biological role, this protein binds specifically to 23S rRNA; its binding is stimulated by other ribosomal proteins, e.g. L4, L17, and L20. It is important during the early stages of 50S assembly. It makes multiple contacts with different domains of the 23S rRNA in the assembled 50S subunit and ribosome. Its function is as follows. The globular domain of the protein is located near the polypeptide exit tunnel on the outside of the subunit, while an extended beta-hairpin is found that lines the wall of the exit tunnel in the center of the 70S ribosome. This Gloeobacter violaceus (strain ATCC 29082 / PCC 7421) protein is Large ribosomal subunit protein uL22.